Consider the following 246-residue polypeptide: tRNA (guanine-N(7)-)-methyltransferase (246 aa).

Positions 77, 102, 129, and 152 each coordinate S-adenosyl-L-methionine. D152 is an active-site residue. Substrate-binding positions include K156, D188, and 225 to 228 (TKFE).

It belongs to the class I-like SAM-binding methyltransferase superfamily. TrmB family.

The catalysed reaction is guanosine(46) in tRNA + S-adenosyl-L-methionine = N(7)-methylguanosine(46) in tRNA + S-adenosyl-L-homocysteine. The protein operates within tRNA modification; N(7)-methylguanine-tRNA biosynthesis. Catalyzes the formation of N(7)-methylguanine at position 46 (m7G46) in tRNA. This Haemophilus influenzae (strain ATCC 51907 / DSM 11121 / KW20 / Rd) protein is tRNA (guanine-N(7)-)-methyltransferase.